Consider the following 63-residue polypeptide: DNA-directed RNA polymerase 7 kDa subunit (63 aa).

It belongs to the poxviridae DNA-directed RNA polymerase 7 kDa subunit family. In terms of assembly, the DNA-dependent RNA polymerase used for intermediate and late genes expression consists of eight subunits 147 kDa, 133 kDa, 35 kDa, 30 kDa, 22 kDa, 19 kDa, 18 kDa and 7 kDa totalling more than 500 kDa in mass. The same holoenzyme, with the addition of the transcription-specificity factor RAP94, is used for early gene expression.

It localises to the virion. It carries out the reaction RNA(n) + a ribonucleoside 5'-triphosphate = RNA(n+1) + diphosphate. Part of the DNA-dependent RNA polymerase which catalyzes the transcription of viral DNA into RNA using the four ribonucleoside triphosphates as substrates. Responsible for the transcription of early, intermediate and late genes. DNA-dependent RNA polymerase associates with the early transcription factor (ETF) thereby allowing the early genes transcription. Late transcription, and probably also intermediate transcription, require newly synthesized RNA polymerase. The polypeptide is DNA-directed RNA polymerase 7 kDa subunit (RPO7) (Homo sapiens (Human)).